A 118-amino-acid polypeptide reads, in one-letter code: Large ribosomal subunit protein uL18 (118 aa).

The interval 1-26 is disordered; sequence MISKPDKNKIRQKRHRRVRGKLSGTA. Positions 10 to 20 are enriched in basic residues; sequence IRQKRHRRVRG.

The protein belongs to the universal ribosomal protein uL18 family. Part of the 50S ribosomal subunit; part of the 5S rRNA/L5/L18/L25 subcomplex. Contacts the 5S and 23S rRNAs.

This is one of the proteins that bind and probably mediate the attachment of the 5S RNA into the large ribosomal subunit, where it forms part of the central protuberance. This is Large ribosomal subunit protein uL18 from Streptococcus equi subsp. zooepidemicus (strain H70).